The chain runs to 477 residues: Trigger factor (477 aa).

The region spanning 169-254 (EDRVTIDYLG…VKEVAKPNEL (86 aa)) is the PPIase FKBP-type domain. A disordered region spans residues 435–477 (VSKEELTAEDEDAASEAKPAKKAAAKKKAAPKKKAEEGKSEEA). The span at 454-466 (AKKAAAKKKAAPK) shows a compositional bias: basic residues. Basic and acidic residues predominate over residues 467–477 (KKAEEGKSEEA).

It belongs to the FKBP-type PPIase family. Tig subfamily.

Its subcellular location is the cytoplasm. It catalyses the reaction [protein]-peptidylproline (omega=180) = [protein]-peptidylproline (omega=0). Its function is as follows. Involved in protein export. Acts as a chaperone by maintaining the newly synthesized protein in an open conformation. Functions as a peptidyl-prolyl cis-trans isomerase. The chain is Trigger factor (tig) from Brucella melitensis biotype 1 (strain ATCC 23456 / CCUG 17765 / NCTC 10094 / 16M).